Reading from the N-terminus, the 438-residue chain is ATP-dependent RNA helicase SUB2 (438 aa).

Acidic residues predominate over residues 1 to 19; sequence MSHEGEEDLLEYSDNEQEI. Positions 1–44 are disordered; the sequence is MSHEGEEDLLEYSDNEQEIQVDNTKATEVAGNGEEAADGKDGDK. The Q motif motif lies at 54 to 82; sequence TGFKDFLLKPELSRAIIDCGFEHPSEVQQ. The Helicase ATP-binding domain maps to 85 to 260; it reads IPQSIHGTDV…RRFLQNPLEI (176 aa). 98-105 serves as a coordination point for ATP; that stretch reads AKSGLGKT. Residues 207–210 carry the DECD box motif; it reads DECD. Positions 272 to 433 constitute a Helicase C-terminal domain; the sequence is GLQQYYIRLE…EFPEEGVDPS (162 aa).

The protein belongs to the DEAD box helicase family. DECD subfamily.

The protein resides in the nucleus. The enzyme catalyses ATP + H2O = ADP + phosphate + H(+). ATP-binding RNA helicase involved in transcription elongation and required for the export of mRNA out of the nucleus. SUB2 also plays a role in pre-mRNA splicing and spliceosome assembly. May be involved in rDNA and telomeric silencing, and maintenance of genome integrity. In Eremothecium gossypii (strain ATCC 10895 / CBS 109.51 / FGSC 9923 / NRRL Y-1056) (Yeast), this protein is ATP-dependent RNA helicase SUB2 (SUB2).